The primary structure comprises 186 residues: UPF0301 protein Neut_0448 (186 aa).

It belongs to the UPF0301 (AlgH) family.

The chain is UPF0301 protein Neut_0448 from Nitrosomonas eutropha (strain DSM 101675 / C91 / Nm57).